The primary structure comprises 74 residues: UPF0346 protein LCA_0996 (74 aa).

It belongs to the UPF0346 family.

The polypeptide is UPF0346 protein LCA_0996 (Latilactobacillus sakei subsp. sakei (strain 23K) (Lactobacillus sakei subsp. sakei)).